Reading from the N-terminus, the 339-residue chain is Transcription initiation factor IIB (339 aa).

A TFIIB-type zinc finger spans residues 39–70; sequence EELICPVCGSKSIIKDYERAEIVCEMCGCVLQ. The Zn(2+) site is built by C43, C46, C62, and C65. 2 repeat units span residues 156–239 and 250–331.

The protein belongs to the TFIIB family.

Stabilizes TBP binding to an archaeal box-A promoter. Also responsible for recruiting RNA polymerase II to the pre-initiation complex (DNA-TBP-TFIIB). This is Transcription initiation factor IIB from Methanococcus maripaludis (strain DSM 14266 / JCM 13030 / NBRC 101832 / S2 / LL).